The sequence spans 293 residues: Ribosomal protein L11 methyltransferase (293 aa).

Residues Thr145, Gly166, Asp188, and Asn230 each coordinate S-adenosyl-L-methionine.

Belongs to the methyltransferase superfamily. PrmA family.

It localises to the cytoplasm. It carries out the reaction L-lysyl-[protein] + 3 S-adenosyl-L-methionine = N(6),N(6),N(6)-trimethyl-L-lysyl-[protein] + 3 S-adenosyl-L-homocysteine + 3 H(+). Its function is as follows. Methylates ribosomal protein L11. This chain is Ribosomal protein L11 methyltransferase, found in Salmonella arizonae (strain ATCC BAA-731 / CDC346-86 / RSK2980).